The chain runs to 723 residues: Peroxisomal bifunctional enzyme (723 aa).

The segment at 1-282 (MAEYTRLHNA…FAERKANKWS (282 aa)) is enoyl-CoA hydratase / isomerase. N6-succinyllysine is present on K38. Residue G101 participates in substrate binding. K165 is subject to N6-acetyllysine; alternate. K165 bears the N6-succinyllysine; alternate mark. An N6-acetyllysine modification is found at K171. An N6-acetyllysine; alternate modification is found at K219. Position 219 is an N6-succinyllysine; alternate (K219). An N6-acetyllysine modification is found at K250. 2 positions are modified to N6-succinyllysine: K280 and K290. The tract at residues 283-572 (TPSGASWKTA…DVLCELGRFG (290 aa)) is 3-hydroxyacyl-CoA dehydrogenase. An N6-acetyllysine mark is found at K346, K350, and K464. K532 is modified (N6-succinyllysine). T548 bears the Phosphothreonine mark. Position 577 is an N6-succinyllysine (K577). N6-acetyllysine; alternate occurs at positions 584, 591, and 710. N6-succinyllysine; alternate is present on residues K584, K591, and K710. The residue at position 718 (S718) is a Phosphoserine. The Microbody targeting signal motif lies at 721–723 (SKL). At K722 the chain carries N6-succinyllysine.

The protein in the N-terminal section; belongs to the enoyl-CoA hydratase/isomerase family. It in the C-terminal section; belongs to the 3-hydroxyacyl-CoA dehydrogenase family. Monomer. Acetylated, leading to enhanced enzyme activity. Acetylation is enhanced by up to 80% after treatment either with trichostin A (TSA) or with nicotinamide (NAM) with highest increase on Lys-346. Acetylation and enzyme activity increased by about 1.5% on addition of fatty acids. In terms of tissue distribution, liver and kidney. Strongly expressed in the terminal segments of the proximal tubule. Lower amounts seen in the brain.

It is found in the peroxisome. The catalysed reaction is a (3S)-3-hydroxyacyl-CoA = a (2E)-enoyl-CoA + H2O. It catalyses the reaction a 4-saturated-(3S)-3-hydroxyacyl-CoA = a (3E)-enoyl-CoA + H2O. It carries out the reaction a (3Z)-enoyl-CoA = a 4-saturated (2E)-enoyl-CoA. The enzyme catalyses a (3E)-enoyl-CoA = a 4-saturated (2E)-enoyl-CoA. The catalysed reaction is a (3S)-3-hydroxyacyl-CoA + NAD(+) = a 3-oxoacyl-CoA + NADH + H(+). It catalyses the reaction (2S,3S)-3-hydroxy-2-methylbutanoyl-CoA = (2E)-2-methylbut-2-enoyl-CoA + H2O. It carries out the reaction (3S)-hydroxyhexadecanoyl-CoA + NAD(+) = 3-oxohexadecanoyl-CoA + NADH + H(+). The enzyme catalyses (3S)-hydroxyhexadecanoyl-CoA = (2E)-hexadecenoyl-CoA + H2O. The catalysed reaction is (2E)-hexadecenedioyl-CoA + H2O = (3S)-hydroxyhexadecanedioyl-CoA. It catalyses the reaction (3S)-hydroxyhexadecanedioyl-CoA + NAD(+) = 3-oxohexadecanedioyl-CoA + NADH + H(+). It carries out the reaction (3E,5Z)-tetradecadienoyl-CoA = (2E,5Z)-tetradecadienoyl-CoA. The enzyme catalyses (3E,5Z)-octadienoyl-CoA = (2E,5Z)-octadienoyl-CoA. The catalysed reaction is (3S)-hydroxydecanoyl-CoA + NAD(+) = 3-oxodecanoyl-CoA + NADH + H(+). It catalyses the reaction (3E)-decenoyl-CoA = (2E)-decenoyl-CoA. It carries out the reaction (3Z)-hexenoyl-CoA = (2E)-hexenoyl-CoA. The enzyme catalyses (3E)-hexenoyl-CoA = (2E)-hexenoyl-CoA. The catalysed reaction is (3S)-hydroxydecanoyl-CoA = (2E)-decenoyl-CoA + H2O. It catalyses the reaction (3S)-hydroxyhexanoyl-CoA = (2E)-hexenoyl-CoA + H2O. The protein operates within lipid metabolism; fatty acid beta-oxidation. With respect to regulation, enzyme activity enhanced by acetylation. In terms of biological role, peroxisomal trifunctional enzyme possessing 2-enoyl-CoA hydratase, 3-hydroxyacyl-CoA dehydrogenase, and delta 3, delta 2-enoyl-CoA isomerase activities. Catalyzes two of the four reactions of the long chain fatty acids peroxisomal beta-oxidation pathway. Can also use branched-chain fatty acids such as 2-methyl-2E-butenoyl-CoA as a substrate, which is hydrated into (2S,3S)-3-hydroxy-2-methylbutanoyl-CoA. Optimal isomerase for 2,5 double bonds into 3,5 form isomerization in a range of enoyl-CoA species. Also able to isomerize both 3-cis and 3-trans double bonds into the 2-trans form in a range of enoyl-CoA species. With HSD17B4, catalyzes the hydration of trans-2-enoyl-CoA and the dehydrogenation of 3-hydroxyacyl-CoA, but with opposite chiral specificity. Regulates the amount of medium-chain dicarboxylic fatty acids which are essential regulators of all fatty acid oxidation pathways. Also involved in the degradation of long-chain dicarboxylic acids through peroxisomal beta-oxidation. The protein is Peroxisomal bifunctional enzyme of Homo sapiens (Human).